The chain runs to 493 residues: Probable cytosol aminopeptidase (493 aa).

Mn(2+) is bound by residues Lys260 and Asp265. The active site involves Lys272. Mn(2+) contacts are provided by Asp284, Asp343, and Glu345. Arg347 is a catalytic residue.

The protein belongs to the peptidase M17 family. Mn(2+) is required as a cofactor.

Its subcellular location is the cytoplasm. The enzyme catalyses Release of an N-terminal amino acid, Xaa-|-Yaa-, in which Xaa is preferably Leu, but may be other amino acids including Pro although not Arg or Lys, and Yaa may be Pro. Amino acid amides and methyl esters are also readily hydrolyzed, but rates on arylamides are exceedingly low.. The catalysed reaction is Release of an N-terminal amino acid, preferentially leucine, but not glutamic or aspartic acids.. Presumably involved in the processing and regular turnover of intracellular proteins. Catalyzes the removal of unsubstituted N-terminal amino acids from various peptides. The sequence is that of Probable cytosol aminopeptidase from Nostoc punctiforme (strain ATCC 29133 / PCC 73102).